Reading from the N-terminus, the 777-residue chain is Rho-GTPase-activating protein 8 (777 aa).

Residues 3–420 (SSFSNGFWSK…YQEIIQPESD (418 aa)) form the F-BAR domain. Residues 117-172 (QKLQTSQQVLTNQIKSYEKKYYTLKKTKSAYYNKCRNLEDYEEESKESNETTSEAI) are a coiled coil. The 84-residue stretch at 213 to 296 (VLQEIPLQDY…WKDKAFQFAG (84 aa)) folds into the DEP domain. One can recognise a Rho-GAP domain in the interval 454–650 (VDVEFLSHRD…DLLTYGPSIF (197 aa)). The tract at residues 667-709 (LYQSSATPRSTDVSPTRPDSISSVRSHTAVESPRSSFEELQPS) is disordered. Over residues 668–692 (YQSSATPRSTDVSPTRPDSISSVRS) the composition is skewed to polar residues. Residues Ser-676 and Ser-680 each carry the phosphoserine modification. Thr-682 bears the Phosphothreonine mark. Ser-686 carries the phosphoserine modification. Thr-694 is subject to Phosphothreonine. Ser-698 is modified (phosphoserine).

Interacts with pak1/shk1. Post-translationally, phosphorylated by pak1/shk1.

It localises to the cytoplasm. Its function is as follows. Acts in signal transduction. Negatively regulates the pak1/shk1 control pathway. The sequence is that of Rho-GTPase-activating protein 8 (rga8) from Schizosaccharomyces pombe (strain 972 / ATCC 24843) (Fission yeast).